Here is a 290-residue protein sequence, read N- to C-terminus: UPF0761 membrane protein YihY (290 aa).

The next 6 helical transmembrane spans lie at 44–64 (LLSLVPLVAVVFALFAAFPMF), 104–124 (VGACGLIVTALLLMYSIDSAL), 140–160 (FAVYWMILTLGPLLAGASLAI), 183–203 (IFPLLLSWISFWLLYSIVPTI), 210–230 (AIVGAFVAALLFEAGKKGFAL), and 244–264 (VLAVIPILFVWVYWTWCIVLL).

The protein belongs to the UPF0761 family.

It localises to the cell inner membrane. This chain is UPF0761 membrane protein YihY, found in Shigella boydii serotype 4 (strain Sb227).